The primary structure comprises 177 residues: Non-specific lipid transfer protein GPI-anchored 22 (177 aa).

The N-terminal stretch at 1 to 29 (MARFMAYNQNPQMLALCITVAVMFLGVRS) is a signal peptide. 4 disulfide bridges follow: Cys38/Cys81, Cys48/Cys63, Cys64/Cys108, and Cys79/Cys117. Asn113 carries N-linked (GlcNAc...) asparagine glycosylation. Residue Ser152 is the site of GPI-anchor amidated serine attachment. Residues 153 to 177 (SSIKGRDNKQFGLMMAGALSIWYIM) constitute a propeptide, removed in mature form.

The protein belongs to the plant LTP family. Expressed in seedlings, preferentially in hypocotyls and roots. Also observed in siliques.

The protein resides in the cell membrane. Probable lipid transfer protein. The chain is Non-specific lipid transfer protein GPI-anchored 22 from Arabidopsis thaliana (Mouse-ear cress).